Here is a 57-residue protein sequence, read N- to C-terminus: MMKIIYAFLLIAVVAFMGSGIMAEPLAEAIAADKPGQAKEIGIFDRITELINWLVNH.

Residues 1-23 (MMKIIYAFLLIAVVAFMGSGIMA) form the signal peptide. Residues 24-31 (EPLAEAIA) constitute a propeptide that is removed on maturation.

This sequence belongs to the formicidae venom clade 4 family. Expressed by the venom gland.

The protein localises to the secreted. Probable neurotoxin. In Pogonomyrmex maricopa (Maricopa harvester ant), this protein is Myrmicitoxin(1)-Pm7a.